Reading from the N-terminus, the 705-residue chain is Elongation factor G (705 aa).

Residues 8–290 (HRYRNIGIMA…GVIHLLPSPA (283 aa)) enclose the tr-type G domain. GTP-binding positions include 17–24 (AHIDAGKT), 88–92 (DTPGH), and 142–145 (NKMD).

It belongs to the TRAFAC class translation factor GTPase superfamily. Classic translation factor GTPase family. EF-G/EF-2 subfamily.

Its subcellular location is the cytoplasm. In terms of biological role, catalyzes the GTP-dependent ribosomal translocation step during translation elongation. During this step, the ribosome changes from the pre-translocational (PRE) to the post-translocational (POST) state as the newly formed A-site-bound peptidyl-tRNA and P-site-bound deacylated tRNA move to the P and E sites, respectively. Catalyzes the coordinated movement of the two tRNA molecules, the mRNA and conformational changes in the ribosome. The protein is Elongation factor G of Xylella fastidiosa (strain 9a5c).